Consider the following 298-residue polypeptide: Ribosomal RNA small subunit methyltransferase H (298 aa).

S-adenosyl-L-methionine-binding positions include 46–48, D65, F92, D108, and H115; that span reads GGH.

This sequence belongs to the methyltransferase superfamily. RsmH family.

The protein resides in the cytoplasm. It carries out the reaction cytidine(1402) in 16S rRNA + S-adenosyl-L-methionine = N(4)-methylcytidine(1402) in 16S rRNA + S-adenosyl-L-homocysteine + H(+). Its function is as follows. Specifically methylates the N4 position of cytidine in position 1402 (C1402) of 16S rRNA. This chain is Ribosomal RNA small subunit methyltransferase H, found in Nostoc punctiforme (strain ATCC 29133 / PCC 73102).